Here is a 694-residue protein sequence, read N- to C-terminus: Long-chain-fatty-acid--CoA ligase 4 (694 aa).

A disordered region spans residues 1–21 (MTEQYSVAVGEAANEHETAPR). ATP is bound at residue 269–280 (YTSGSTGTPKGV). An FACS motif is present at residues 527-576 (DGWFRTGDIAEWTPKGQVKIIDRKKNLVKTLNGEYIALEKLESIYRSNPY).

The protein belongs to the ATP-dependent AMP-binding enzyme family. As to quaternary structure, interacts with FAT1. Mg(2+) is required as a cofactor.

It is found in the lipid droplet. The enzyme catalyses a long-chain fatty acid + ATP + CoA = a long-chain fatty acyl-CoA + AMP + diphosphate. It carries out the reaction (9Z)-hexadecenoate + ATP + CoA = (9Z)-hexadecenoyl-CoA + AMP + diphosphate. The catalysed reaction is (9Z)-octadecenoate + ATP + CoA = (9Z)-octadecenoyl-CoA + AMP + diphosphate. It catalyses the reaction hexadecanoate + ATP + CoA = hexadecanoyl-CoA + AMP + diphosphate. Activates long-chain fatty acids (LCFA) by esterification of the fatty acids into metabolically active CoA-thioesters for subsequent degradation or incorporation into phospholipids. Also facilitates the transport of LCFAs into the cell, either by active transport or by decreasing the intracellular LCFA concentration. Contributes, with FAA1, to the activation of imported myristate. Also involved in long-chain base (LCB) uptake. In contrast ot LCFA uptake, LCB uptake does not require ATP, suggesting that the enzyme is directly involved in LCB uptake. Involved in the sphingolipid-to-glycerolipid metabolic pathway, converting the sphingolipid metabolite hexadecenoic acid to hexadecenoyl-CoA, which is then further converted to glycerolipids. This Saccharomyces cerevisiae (strain ATCC 204508 / S288c) (Baker's yeast) protein is Long-chain-fatty-acid--CoA ligase 4 (FAA4).